The following is a 490-amino-acid chain: GTPase Der (490 aa).

EngA-type G domains lie at 3–166 and 203–376; these read PVVA…MDDV and IKLA…DSST. Residues 9–16, 56–60, 118–121, 209–216, 256–260, and 321–324 each bind GTP; these read GRPNVGKS, DTGGI, NKTD, DTAGV, and NKWD. One can recognise a KH-like domain in the interval 377-461; sequence RRVSTAMLTR…PIRIQFKEGE (85 aa).

Belongs to the TRAFAC class TrmE-Era-EngA-EngB-Septin-like GTPase superfamily. EngA (Der) GTPase family. In terms of assembly, associates with the 50S ribosomal subunit.

In terms of biological role, GTPase that plays an essential role in the late steps of ribosome biogenesis. The polypeptide is GTPase Der (Salmonella typhi).